The primary structure comprises 372 residues: Probable dual-specificity RNA methyltransferase RlmN (372 aa).

Catalysis depends on E106, which acts as the Proton acceptor. The region spanning 112-359 is the Radical SAM core domain; the sequence is YPQRNTVCIS…SCTVRDTRGR (248 aa). Residues C119 and C365 are joined by a disulfide bond. [4Fe-4S] cluster is bound by residues C126, C130, and C133. S-adenosyl-L-methionine-binding positions include 186–187, S220, 243–245, and N322; these read GE and SLH. Residue C365 is the S-methylcysteine intermediate of the active site.

Belongs to the radical SAM superfamily. RlmN family. Requires [4Fe-4S] cluster as cofactor.

It localises to the cytoplasm. The catalysed reaction is adenosine(2503) in 23S rRNA + 2 reduced [2Fe-2S]-[ferredoxin] + 2 S-adenosyl-L-methionine = 2-methyladenosine(2503) in 23S rRNA + 5'-deoxyadenosine + L-methionine + 2 oxidized [2Fe-2S]-[ferredoxin] + S-adenosyl-L-homocysteine. It catalyses the reaction adenosine(37) in tRNA + 2 reduced [2Fe-2S]-[ferredoxin] + 2 S-adenosyl-L-methionine = 2-methyladenosine(37) in tRNA + 5'-deoxyadenosine + L-methionine + 2 oxidized [2Fe-2S]-[ferredoxin] + S-adenosyl-L-homocysteine. Functionally, specifically methylates position 2 of adenine 2503 in 23S rRNA and position 2 of adenine 37 in tRNAs. This is Probable dual-specificity RNA methyltransferase RlmN from Mycolicibacterium smegmatis (strain ATCC 700084 / mc(2)155) (Mycobacterium smegmatis).